The following is a 66-amino-acid chain: Sarcoplasmic/endoplasmic reticulum calcium ATPase regulator ARLN (66 aa).

An N-acetylmethionine modification is found at M1. The interval 1-38 (MEVDVPGVDGRDGLRERRGLSEGGRQNLDVRPQSGANG) is disordered. Residues 9-20 (DGRDGLRERRGL) are compositionally biased toward basic and acidic residues. The chain crosses the membrane as a helical span at residues 45 to 65 (WLDLWLFIFFDVVVFLFVYFL).

As to quaternary structure, homooligomer. Can also form heterooligomers with other sarcoplasmic/endoplasmic reticulum calcium ATPase (SERCA) regulators ERLN, PLN, SLN and STRIT1/DWORF. Monomer. Interacts as a monomer with ATP2A2/SERCA2; the interaction results in inhibition of ATP2A2 Ca(2+) affinity.

The protein localises to the endoplasmic reticulum membrane. Its function is as follows. Inhibits the activity of the calcium ATPases ATP2A2/SERCA2 and ATP2A3/SERCA3 by decreasing their apparent affinity for Ca(2+). This chain is Sarcoplasmic/endoplasmic reticulum calcium ATPase regulator ARLN (ARLN), found in Pongo abelii (Sumatran orangutan).